The sequence spans 69 residues: DNA gyrase inhibitor YacG (69 aa).

Zn(2+) is bound by residues cysteine 12, cysteine 15, cysteine 31, and cysteine 35. A disordered region spans residues 49-69 (RVPVEPKPDEGETPDQAERPQ).

The protein belongs to the DNA gyrase inhibitor YacG family. As to quaternary structure, interacts with GyrB. Zn(2+) is required as a cofactor.

Functionally, inhibits all the catalytic activities of DNA gyrase by preventing its interaction with DNA. Acts by binding directly to the C-terminal domain of GyrB, which probably disrupts DNA binding by the gyrase. This is DNA gyrase inhibitor YacG from Thiobacillus denitrificans (strain ATCC 25259 / T1).